The sequence spans 202 residues: Protein lin-28 homolog A (202 aa).

Disordered regions lie at residues 1 to 33 and 100 to 128; these read MPPA…GSFH and SLQV…RSKG. The span at 18-29 shows a compositional bias: acidic residues; that stretch reads EEEEAASSEEDS. In terms of domain architecture, CSD spans 33-106; it reads HGSGVCKWFN…GLESLQVTGP (74 aa). A flexible linker region spans residues 107–130; the sequence is GGAPCVGSEKKPKGTQKRRSKGDR. 2 CCHC-type zinc fingers span residues 129 to 146 and 151 to 168; these read DRCF…ECQL and KKCH…NCPI. Residues Cys131, Cys134, His139, Cys144, Cys153, Cys156, His161, and Cys166 each contribute to the Zn(2+) site. The interval 170-202 is disordered; the sequence is AQQLSPGSQGKSTTSTGEEEDMSHTPLLPESTD. The segment covering 171–185 has biased composition (polar residues); that stretch reads QQLSPGSQGKSTTST. Ser174 bears the Phosphoserine mark.

Belongs to the lin-28 family. Monomer.

Its subcellular location is the cytoplasm. The protein localises to the rough endoplasmic reticulum. It is found in the P-body. The protein resides in the stress granule. It localises to the nucleus. Its subcellular location is the nucleolus. Functionally, RNA-binding protein that inhibits processing of pre-let-7 miRNAs and regulates translation of mRNAs that control developmental timing, pluripotency and metabolism. Seems to recognize a common structural G-quartet (G4) feature in its miRNA and mRNA targets. 'Translational enhancer' that drives specific mRNAs to polysomes and increases the efficiency of protein synthesis. Its association with the translational machinery and target mRNAs results in an increased number of initiation events per molecule of mRNA and, indirectly, in mRNA stabilization. Suppressor of microRNA (miRNA) biogenesis, including that of let-7. Binds specific target miRNA precursors (pre-miRNAs), recognizing an 5'-GGAG-3' motif found in their terminal loop, and recruits uridylyltransferase. This results in the terminal uridylation of target pre-miRNAs. Uridylated pre-miRNAs fail to be processed by Dicer and undergo degradation. Localized to the periendoplasmic reticulum area, binds to a large number of spliced mRNAs and inhibits the translation of mRNAs destined for the ER, reducing the synthesis of transmembrane proteins, ER or Golgi lumen proteins, and secretory proteins. Binds to and enhances the translation of mRNAs for several metabolic enzymes, increasing glycolysis and oxidative phosphorylation. Which, with the let-7 repression may enhance tissue repair in adult tissue. This chain is Protein lin-28 homolog A (lin28a), found in Danio rerio (Zebrafish).